Reading from the N-terminus, the 487-residue chain is Malonate-semialdehyde dehydrogenase 3 (487 aa).

Residues phenylalanine 154, lysine 178, glutamate 181, arginine 182, and serine 231 each coordinate NAD(+). Cysteine 286 serves as the catalytic Nucleophile. Glutamate 386 provides a ligand contact to NAD(+).

The protein belongs to the aldehyde dehydrogenase family. IolA subfamily. Homotetramer.

The catalysed reaction is 3-oxopropanoate + NAD(+) + CoA + H2O = hydrogencarbonate + acetyl-CoA + NADH + H(+). It carries out the reaction 2-methyl-3-oxopropanoate + NAD(+) + CoA + H2O = propanoyl-CoA + hydrogencarbonate + NADH + H(+). Its pathway is polyol metabolism; myo-inositol degradation into acetyl-CoA; acetyl-CoA from myo-inositol: step 7/7. Its function is as follows. Catalyzes the oxidation of malonate semialdehyde (MSA) and methylmalonate semialdehyde (MMSA) into acetyl-CoA and propanoyl-CoA, respectively. Is involved in a myo-inositol catabolic pathway. Bicarbonate, and not CO2, is the end-product of the enzymatic reaction. In Bacillus cereus (strain ZK / E33L), this protein is Malonate-semialdehyde dehydrogenase 3.